The following is a 372-amino-acid chain: Partitioning defective 6 homolog beta (372 aa).

Ser-11 is subject to Phosphoserine. One can recognise a PB1 domain in the interval 16–96; it reads TMEVKSKFGA…PLLRIFIQKK (81 aa). The interaction with PARD3 and CDC42 stretch occupies residues 126–253; the sequence is RKKPHIVISM…ITVRPANQRN (128 aa). The Pseudo-CRIB domain occupies 133-150; the sequence is ISMPQDFRPVSSIIDVDI. In terms of domain architecture, PDZ spans 157-250; it reads RVRLYKYGTE…NLIITVRPAN (94 aa). Residues 253-272 show a composition bias toward polar residues; the sequence is NNVVRNSRTSGSSGQSTDNS. A disordered region spans residues 253-292; it reads NNVVRNSRTSGSSGQSTDNSLLGYPQQIEPSFEPEDEDSE.

Belongs to the PAR6 family. Interacts with PARD3. Interacts with GTP-bound forms of CDC42 and RAC1. Interacts with GTP-bound RHOQ/TC10. Interacts with PALS1. Interacts with the N-terminal part of PRKCI and PRKCZ. Part of a complex with PARD3, CDC42 or RAC1 and PRKCI or PRKCZ. Part of a complex with LLGL1 and PRKCI. Interacts with PARD3B. Interacts with ECT2. As to expression, expressed in pancreas and in both adult and fetal kidney. Weakly expressed in placenta and lung. Not expressed in other tissues.

The protein localises to the cytoplasm. The protein resides in the cell membrane. It is found in the cell junction. It localises to the tight junction. In terms of biological role, adapter protein involved in asymmetrical cell division and cell polarization processes. Probably involved in formation of epithelial tight junctions. Association with PARD3 may prevent the interaction of PARD3 with F11R/JAM1, thereby preventing tight junction assembly. The PARD6-PARD3 complex links GTP-bound Rho small GTPases to atypical protein kinase C proteins. The protein is Partitioning defective 6 homolog beta (PARD6B) of Homo sapiens (Human).